The chain runs to 354 residues: Methionine import ATP-binding protein MetN 2 (354 aa).

Positions 6-250 (IELKNISVHF…PQKPLTKEFI (245 aa)) constitute an ABC transporter domain. Position 42 to 49 (42 to 49 (GYSGAGKS)) interacts with ATP.

It belongs to the ABC transporter superfamily. Methionine importer (TC 3.A.1.24) family. As to quaternary structure, the complex is composed of two ATP-binding proteins (MetN), two transmembrane proteins (MetI) and a solute-binding protein (MetQ).

The protein resides in the cell membrane. It catalyses the reaction L-methionine(out) + ATP + H2O = L-methionine(in) + ADP + phosphate + H(+). The enzyme catalyses D-methionine(out) + ATP + H2O = D-methionine(in) + ADP + phosphate + H(+). Part of the ABC transporter complex MetNIQ involved in methionine import. Responsible for energy coupling to the transport system. This chain is Methionine import ATP-binding protein MetN 2, found in Oenococcus oeni (strain ATCC BAA-331 / PSU-1).